An 882-amino-acid chain; its full sequence is Dual specificity tyrosine-phosphorylation-regulated kinase mbk-1 (882 aa).

A compositionally biased stretch (polar residues) spans 1–42; sequence MNTADVPDNLQSWGQQPSSSYSNTQQHSQMTNLPPINHNNLC. Disordered regions lie at residues 1 to 45, 62 to 81, 212 to 239, and 255 to 308; these read MNTA…CDTE, QKQQKQQEQQHIQQQNAQRF, KQVRRDRHKSQDAGKPKGSKDGSGASLT, and NHYQ…NGYD. The segment covering 64–79 has biased composition (low complexity); the sequence is QQKQQEQQHIQQQNAQ. The segment covering 220–231 has biased composition (basic and acidic residues); sequence KSQDAGKPKGSK. The segment covering 290–308 has biased composition (low complexity); it reads QQQQRQKSSRGGPYNNGYD. The Protein kinase domain maps to 328–649; sequence ILSDTPVGKG…PYYVVRHPFL (322 aa). ATP-binding positions include 334 to 342 and Lys357; that span reads VGKGSFGQV. The Proton acceptor role is filled by Asp456. Disordered stretches follow at residues 742–761 and 789–882; these read HNPNYQYSQPQQQQQQQYQQ and QQQQ…NNKL. Low complexity-rich tracts occupy residues 747–761 and 789–810; these read QYSQPQQQQQQQYQQ and QQQQQQRQHMPQAQSSSQQHLQ. Residues 816-827 show a composition bias toward basic and acidic residues; that stretch reads RQQDQNEWRNQF. The span at 843 to 869 shows a compositional bias: polar residues; the sequence is SVSNQISRNQFNPQQVSMTHGNVNANN.

Belongs to the protein kinase superfamily. CMGC Ser/Thr protein kinase family. MNB/DYRK subfamily. Mg(2+) is required as a cofactor. As to expression, expressed in all somatic cells.

The protein localises to the nucleus. It carries out the reaction L-seryl-[protein] + ATP = O-phospho-L-seryl-[protein] + ADP + H(+). The catalysed reaction is L-threonyl-[protein] + ATP = O-phospho-L-threonyl-[protein] + ADP + H(+). It catalyses the reaction L-tyrosyl-[protein] + ATP = O-phospho-L-tyrosyl-[protein] + ADP + H(+). Its function is as follows. Possible role in the function of olfactory neurons. This Caenorhabditis elegans protein is Dual specificity tyrosine-phosphorylation-regulated kinase mbk-1.